Reading from the N-terminus, the 262-residue chain is MGNIKTLLENRFKKPTSDKMESLAKKRLEGELSPFLNGFTNPKLSSQEEAKFRQLLEEYSFSNEISKHDLQQLCHLSAQVKQIHHQAVLLHGERIKKVRELLTSYREGAFSAWLLLTYGNRQTPYNFLVYYELFSTLPDSLKLELEKLPRQAVYTLAAREGTQEKKEAIIRNYQGETKGELLEIIRKEFPLLPTDRRHTPLSQKAFTLLAKGTKLLRQCTDVSHEELIALEKLIKKLQKVTTNLLSNTKVSRNDNEIQNSRN.

Belongs to the UPF0137 (pGP6-D) family.

This chain is Virulence plasmid protein pGP6-D-related protein, found in Chlamydia muridarum (strain MoPn / Nigg).